The primary structure comprises 282 residues: Keratin-associated protein 10-1 (282 aa).

24 consecutive repeat copies span residues 26–30, 31–35, 36–40, 57–61, 79–83, 89–93, 99–103, 104–108, 109–113, 121–125, 131–135, 141–145, 146–150, 163–167, 173–177, 183–187, 193–197, 198–202, 210–214, 220–224, 225–229, 244–248, 251–255, and 262–266. Positions 26 to 266 are 24 X 5 AA repeats of C-C-X(3); it reads CCEPHCCALS…SCQASCCRPA (241 aa).

This sequence belongs to the KRTAP type 10 family. Interacts with hair keratins. In terms of tissue distribution, restricted to a narrow region of the hair fiber cuticle, lying approximately 20 cell layers above the apex of the dermal papilla of the hair root; not detected in any other tissues.

In the hair cortex, hair keratin intermediate filaments are embedded in an interfilamentous matrix, consisting of hair keratin-associated proteins (KRTAP), which are essential for the formation of a rigid and resistant hair shaft through their extensive disulfide bond cross-linking with abundant cysteine residues of hair keratins. The matrix proteins include the high-sulfur and high-glycine-tyrosine keratins. This chain is Keratin-associated protein 10-1 (KRTAP10-1), found in Homo sapiens (Human).